Here is a 477-residue protein sequence, read N- to C-terminus: Methylenetetrahydrofolate--tRNA-(uracil-5-)-methyltransferase TrmFO (477 aa).

An FAD-binding site is contributed by 14–19; sequence GGGLAG.

Belongs to the MnmG family. TrmFO subfamily. It depends on FAD as a cofactor.

Its subcellular location is the cytoplasm. It carries out the reaction uridine(54) in tRNA + (6R)-5,10-methylene-5,6,7,8-tetrahydrofolate + NADH + H(+) = 5-methyluridine(54) in tRNA + (6S)-5,6,7,8-tetrahydrofolate + NAD(+). The catalysed reaction is uridine(54) in tRNA + (6R)-5,10-methylene-5,6,7,8-tetrahydrofolate + NADPH + H(+) = 5-methyluridine(54) in tRNA + (6S)-5,6,7,8-tetrahydrofolate + NADP(+). In terms of biological role, catalyzes the folate-dependent formation of 5-methyl-uridine at position 54 (M-5-U54) in all tRNAs. The sequence is that of Methylenetetrahydrofolate--tRNA-(uracil-5-)-methyltransferase TrmFO from Rhizobium etli (strain ATCC 51251 / DSM 11541 / JCM 21823 / NBRC 15573 / CFN 42).